A 187-amino-acid polypeptide reads, in one-letter code: Acireductone dioxygenase (187 aa).

His-87, His-89, Glu-93, and His-136 together coordinate Fe(2+). The Ni(2+) site is built by His-87, His-89, Glu-93, and His-136.

This sequence belongs to the acireductone dioxygenase (ARD) family. The cofactor is Fe(2+). Ni(2+) serves as cofactor.

It is found in the cytoplasm. The protein resides in the nucleus. The catalysed reaction is 1,2-dihydroxy-5-(methylsulfanyl)pent-1-en-3-one + O2 = 4-methylsulfanyl-2-oxobutanoate + formate + 2 H(+). It catalyses the reaction 1,2-dihydroxy-5-(methylsulfanyl)pent-1-en-3-one + O2 = 3-(methylsulfanyl)propanoate + CO + formate + 2 H(+). Its pathway is amino-acid biosynthesis; L-methionine biosynthesis via salvage pathway; L-methionine from S-methyl-5-thio-alpha-D-ribose 1-phosphate: step 5/6. Its function is as follows. Catalyzes 2 different reactions between oxygen and the acireductone 1,2-dihydroxy-3-keto-5-methylthiopentene (DHK-MTPene) depending upon the metal bound in the active site. Fe-containing acireductone dioxygenase (Fe-ARD) produces formate and 2-keto-4-methylthiobutyrate (KMTB), the alpha-ketoacid precursor of methionine in the methionine recycle pathway. Ni-containing acireductone dioxygenase (Ni-ARD) produces methylthiopropionate, carbon monoxide and formate, and does not lie on the methionine recycle pathway. The polypeptide is Acireductone dioxygenase (Cryptococcus neoformans var. neoformans serotype D (strain JEC21 / ATCC MYA-565) (Filobasidiella neoformans)).